A 630-amino-acid polypeptide reads, in one-letter code: Plastin-3 (630 aa).

EF-hand domains lie at 12 to 47 and 52 to 87; these read DELDELKEAFAKVDLNSNGFICDYELHELFKEANMP and KVREIIQKLMLDGDRNKDGKISFDEFVYIFQEVKSS. Positions 25, 27, 29, 36, 65, 67, 69, 71, and 76 each coordinate Ca(2+). Actin-binding stretches follow at residues 109–382 and 383–627; these read TSEL…ALTK and PENQ…GRGM. Calponin-homology (CH) domains are found at residues 123–239 and 267–378; these read EEEK…KIGL and LSPE…NKYP. Phosphoserine occurs at positions 268, 293, 326, and 339. Thr-391 is modified (phosphothreonine). Calponin-homology (CH) domains are found at residues 397–506 and 518–627; these read TREE…RRYT and KAND…GRGM.

As to quaternary structure, monomer.

The protein localises to the cytoplasm. Actin-bundling protein. This Bos taurus (Bovine) protein is Plastin-3 (PLS3).